The chain runs to 534 residues: MTQAEIKLCSLLLQEHFGEIVEKIGVHLIRTGSQPLRVIAHDTGTSLDQVKKALCVLVQHNLVSYQVHKRGVVEYEAQCSRVLRMLRYPRYIYTTKTLYSDTGELIVEELLLNGKLTMSAVVKKVADRLTETMEDGKTMDYAEVSNTFVRLADTHFVQRCPSVPTTENSDPGPPPPAPTLVINEKDMYLVPKLSLIGKGKRRRSSDEDAAGEPKAKRPKYTTDNKEPIPDDGIYWQANLDRFHQHFRDQAIVSAVANRMDQTSSEIVRTMLRMSEITTSSSAPFTQPLSSNEIFRSLPVGYNISKQVLDQYLTLLADDPLEFVGKSGDSGGGMYVINLHKALASLATATLESVVQERFGSRCARIFRLVLQKKHIEQKQVEDFAMIPAKEAKDMLYKMLSENFMSLQEIPKTPDHAPSRTFYLYTVNILSAARMLLHRCYKSIANLIERRQFETKENKRLLEKSQRVEAIIASMQATGAEEAQLQEIEEMITAPERQQLETLKRNVNKLDASEIQVDETIFLLESYIECTMKRQ.

Residues 161 to 181 are disordered; that stretch reads PSVPTTENSDPGPPPPAPTLV. S194 carries the post-translational modification Phosphoserine. The segment at 197-228 is disordered; sequence GKGKRRRSSDEDAAGEPKAKRPKYTTDNKEPI. The segment covering 211 to 228 has biased composition (basic and acidic residues); that stretch reads GEPKAKRPKYTTDNKEPI.

It belongs to the eukaryotic RPC3/POLR3C RNA polymerase subunit family. As to quaternary structure, component of the RNA polymerase III complex consisting of 17 subunits: a ten-subunit horseshoe-shaped catalytic core composed of POLR3A/RPC1, POLR3B/RPC2, POLR1C/RPAC1, POLR1D/RPAC2, POLR3K/RPC10, POLR2E/RPABC1, POLR2F/RPABC2, POLR2H/RPABC3, POLR2K/RPABC4 and POLR2L/RPABC5; a mobile stalk composed of two subunits POLR3H/RPC8 and CRCP/RPC9, protruding from the core and functioning primarily in transcription initiation; and additional subunits homologous to general transcription factors of the RNA polymerase II machinery, POLR3C/RPC3-POLR3F/RPC6-POLR3G/RPC7 heterotrimer required for transcription initiation and POLR3D/RPC4-POLR3E/RPC5 heterodimer involved in both transcription initiation and termination. Directly interacts with POLR3G/RPC7 and POLR3GL. Directly interacts with POLR3F/RPC6. Interacts with GTF3C4. As part of the RNA polymerase III complex, interacts with PKP2.

The protein localises to the nucleus. DNA-dependent RNA polymerase catalyzes the transcription of DNA into RNA using the four ribonucleoside triphosphates as substrates. Specific peripheric component of RNA polymerase III (Pol III) which synthesizes small non-coding RNAs including 5S rRNA, snRNAs, tRNAs and miRNAs from at least 500 distinct genomic loci. Part of POLR3C/RPC3-POLR3F/RPC6-POLR3G/RPC7 heterotrimer, coordinates the dynamics of Pol III stalk and clamp modules during the transition from apo to elongation state. Pol III plays a key role in sensing and limiting infection by intracellular bacteria and DNA viruses. Acts as a nuclear and cytosolic DNA sensor involved in innate immune response. Can sense non-self dsDNA that serves as template for transcription into dsRNA. The non-self RNA polymerase III transcripts, such as Epstein-Barr virus-encoded RNAs (EBERs) induce type I interferon and NF-kappa-B through the RIG-I pathway. Preferentially binds single-stranded DNA (ssDNA) in a sequence-independent manner. This Homo sapiens (Human) protein is DNA-directed RNA polymerase III subunit RPC3.